A 548-amino-acid polypeptide reads, in one-letter code: MHLVRWLICLIQLWIQLGAAGSVTLLDPLLIEIPNGKLRGRDNGHYYSYEAIPYAEPPTGELRFEVPKPYKQQWTNTFDATQPPVLCMQWNQFINGTNKLLGVEDCLTVSVYRPKNSSRNNFPVVANLHGGAFMFGGPSQYGHENIMREGSVILVTIGYRLGPLGFVSTGDADLSGNFGLKDQRLALLWIKQNIASFGGEPENILVVGHSAGGASVHLQMLREDFSKVAKAAISFSGNSLDPWVIQQGLRGRAFELGRIVGCGQASDSVTLKKCLKSKPAIEIVSAVRSFLVFSYVPFTPFGPAIESPDAPEAFITHHPIDIIKRGKFSQVPWAVTYTTEDGGYNAALLLEKQASSGRELIVDLNDRWFDWAPYLLFYRDSMTTIKDMDDYSRKLRQEYLGDRRFSVESYWDVQRMFTDLLFKNSVTVSVDLHRKYGKSPVYAFVYDNPSEVGVGQILSGRNDVYFGTVHGDDVFLIFNVSFVPANRRPDEEIISRNFIKMLEYFALSTDDTMAYGDCVFQNNVGSKHMQLLSITRDGCENKQLNFFI.

The N-terminal stretch at 1 to 19 is a signal peptide; the sequence is MHLVRWLICLIQLWIQLGA. A disulfide bridge connects residues cysteine 87 and cysteine 106. Residues asparagine 95 and asparagine 116 are each glycosylated (N-linked (GlcNAc...) asparagine). Serine 210 (acyl-ester intermediate) is an active-site residue. The cysteines at positions 262 and 274 are disulfide-linked. N-linked (GlcNAc...) asparagine glycosylation occurs at asparagine 479. Cysteine 518 and cysteine 539 form a disulfide bridge.

This sequence belongs to the type-B carboxylesterase/lipase family.

It is found in the secreted. It carries out the reaction a carboxylic ester + H2O = an alcohol + a carboxylate + H(+). This is Esterase-5A (Est-5A) from Drosophila persimilis (Fruit fly).